The primary structure comprises 232 residues: tRNA (guanine-N(7)-)-methyltransferase (232 aa).

S-adenosyl-L-methionine contacts are provided by Glu-63, Glu-88, Asp-115, and Asp-137. Asp-137 is a catalytic residue. Substrate-binding positions include Lys-141, Asp-173, and 211–214 (TRYE).

Belongs to the class I-like SAM-binding methyltransferase superfamily. TrmB family.

The catalysed reaction is guanosine(46) in tRNA + S-adenosyl-L-methionine = N(7)-methylguanosine(46) in tRNA + S-adenosyl-L-homocysteine. It participates in tRNA modification; N(7)-methylguanine-tRNA biosynthesis. Its function is as follows. Catalyzes the formation of N(7)-methylguanine at position 46 (m7G46) in tRNA. The chain is tRNA (guanine-N(7)-)-methyltransferase from Agrobacterium fabrum (strain C58 / ATCC 33970) (Agrobacterium tumefaciens (strain C58)).